Here is a 512-residue protein sequence, read N- to C-terminus: Putative ribose/galactose/methyl galactoside import ATP-binding protein 1 (512 aa).

ABC transporter domains lie at 14-251 (IALT…VGRQ) and 262-507 (TSAN…TQRE). 46-53 (GENGAGKS) contacts ATP.

Belongs to the ABC transporter superfamily. Carbohydrate importer 2 (CUT2) (TC 3.A.1.2) family.

Its subcellular location is the cell inner membrane. It carries out the reaction D-ribose(out) + ATP + H2O = D-ribose(in) + ADP + phosphate + H(+). The catalysed reaction is D-galactose(out) + ATP + H2O = D-galactose(in) + ADP + phosphate + H(+). Functionally, part of an ABC transporter complex involved in carbohydrate import. Could be involved in ribose, galactose and/or methyl galactoside import. Responsible for energy coupling to the transport system. The protein is Putative ribose/galactose/methyl galactoside import ATP-binding protein 1 of Burkholderia lata (strain ATCC 17760 / DSM 23089 / LMG 22485 / NCIMB 9086 / R18194 / 383).